Here is a 61-residue protein sequence, read N- to C-terminus: Sec-independent protein translocase protein TatA (61 aa).

Residues 1-21 (MFSNIGFPGLILILVAVLILF) traverse the membrane as a helical segment.

Belongs to the TatA/E family. As to quaternary structure, forms a complex with TatC.

Its subcellular location is the cell membrane. Its function is as follows. Part of the twin-arginine translocation (Tat) system that transports large folded proteins containing a characteristic twin-arginine motif in their signal peptide across membranes. TatA could form the protein-conducting channel of the Tat system. In Bacillus anthracis (strain A0248), this protein is Sec-independent protein translocase protein TatA.